The chain runs to 49 residues: Large ribosomal subunit protein bL33 (49 aa).

Belongs to the bacterial ribosomal protein bL33 family.

In Natranaerobius thermophilus (strain ATCC BAA-1301 / DSM 18059 / JW/NM-WN-LF), this protein is Large ribosomal subunit protein bL33.